The primary structure comprises 653 residues: Fusexin 1 (653 aa).

Positions M1 to A24 are cleaved as a signal peptide. Topologically, residues A25–N559 are extracellular. Cystine bridges form between C129–C167, C398–C441, C468–C487, and C499–C516. The tract at residues D155–S160 is fusion loop. Residues A560 to V580 form a helical membrane-spanning segment. Topologically, residues G581–R604 are cytoplasmic. 2 helical membrane-spanning segments follow: residues L605 to D625 and P626 to A646. At S647–L653 the chain is on the cytoplasmic side.

Belongs to the HAP2/GCS1 family. Fusexin 1 subfamily. In terms of assembly, homotrimer stabilized by interdomain contacts and numerous Ca(2+) and Na(+) ions.

Its subcellular location is the cell surface. The protein localises to the cell membrane. Its function is as follows. Exhibits fusogenic activity. Mediates cell-cell fusion in mammalian cells (bilateral fusion). This Haloplanus natans (strain DSM 17983 / JCM 14081 / CGMCC 1.8972 / RE-101) protein is Fusexin 1.